The primary structure comprises 876 residues: Alanine--tRNA ligase (876 aa).

Residues His564, His568, Cys666, and His670 each coordinate Zn(2+).

It belongs to the class-II aminoacyl-tRNA synthetase family. In terms of assembly, homotetramer. The cofactor is Zn(2+).

It localises to the cytoplasm. It catalyses the reaction tRNA(Ala) + L-alanine + ATP = L-alanyl-tRNA(Ala) + AMP + diphosphate. Functionally, catalyzes the attachment of alanine to tRNA(Ala) in a two-step reaction: alanine is first activated by ATP to form Ala-AMP and then transferred to the acceptor end of tRNA(Ala). Also edits incorrectly charged Ser-tRNA(Ala) and Gly-tRNA(Ala) via its editing domain. The sequence is that of Alanine--tRNA ligase from Salmonella choleraesuis (strain SC-B67).